The sequence spans 205 residues: Urease accessory protein UreE (205 aa).

The disordered stretch occupies residues 171-205 (AHEAHPHAHSHAGGHGHVHSGHGHGGKHGEHDAES). Basic residues predominate over residues 177–196 (HAHSHAGGHGHVHSGHGHGG).

It belongs to the UreE family.

It localises to the cytoplasm. Functionally, involved in urease metallocenter assembly. Binds nickel. Probably functions as a nickel donor during metallocenter assembly. This Bordetella parapertussis (strain 12822 / ATCC BAA-587 / NCTC 13253) protein is Urease accessory protein UreE.